Consider the following 891-residue polypeptide: DNA mismatch repair protein MutS (891 aa).

Residue 646–653 (GPNMAGKS) participates in ATP binding.

This sequence belongs to the DNA mismatch repair MutS family.

Its function is as follows. This protein is involved in the repair of mismatches in DNA. It is possible that it carries out the mismatch recognition step. This protein has a weak ATPase activity. The protein is DNA mismatch repair protein MutS of Rickettsia canadensis (strain McKiel).